The following is a 226-amino-acid chain: High affinity heme transporter (226 aa).

Residues M1–S20 form the signal peptide. Residues C72–C101 are heme binding. Residue S199 is the site of GPI-anchor amidated serine attachment. The propeptide at S200–F226 is removed in mature form.

The protein localises to the cell membrane. Its subcellular location is the vacuole membrane. High affinity heme transporter involved in the assimilation of exogenous heme during conditions of low cellular iron. This Schizosaccharomyces pombe (strain 972 / ATCC 24843) (Fission yeast) protein is High affinity heme transporter.